Reading from the N-terminus, the 105-residue chain is U2-lycotoxin-Ls1c (105 aa).

An N-terminal signal peptide occupies residues 1–17; that stretch reads MIKYVLISALLVVAVYS. The propeptide occupies 18-41; sequence FTIEDSEDALLEEAEDELDTEEER. 4 disulfides stabilise this stretch: Cys-51–Cys-67, Cys-58–Cys-97, Cys-60–Cys-83, and Cys-69–Cys-81.

Belongs to the neurotoxin 04 (omega-agtx) family. 01 (type I omega-agtx) subfamily. Expressed by the venom gland.

Its subcellular location is the secreted. In terms of biological role, insecticidal to house crickets. It induces an excitatory slow-onset impact that leads to irreversible spastic paralysis. It also modifies human voltage-gated potassium channel Kv1.5/KCNA5. Most likely, it binds to the voltage-sensing domain of the channel, suggesting it does not block the pore but prevents its opening at physiological membrane potentials. The recombinant peptide binds to the channel in an irreversible manner and slows down the hKv1.5 current activation kinetics. It is not toxic to mice, when intracranially injected (at 0.5 ug/g mouse). This is U2-lycotoxin-Ls1c from Lycosa singoriensis (Wolf spider).